A 193-amino-acid polypeptide reads, in one-letter code: Rho-related GTP-binding protein RhoC (193 aa).

12-19 (GDGACGKT) is a GTP binding site. The Effector region motif lies at 34–42 (YVPTVFENY). Residues 59-63 (DTAGQ) and 117-120 (NKKD) each bind GTP. Residue Cys190 is modified to Cysteine methyl ester. Cys190 carries the S-geranylgeranyl cysteine lipid modification. Positions 191-193 (PIL) are cleaved as a propeptide — removed in mature form.

Belongs to the small GTPase superfamily. Rho family. As to quaternary structure, interacts with RTKN. Interacts with AKAP13. Interacts with DIAPH1. Interacts with PKN2. Interacts with ROCK1 and ROCK2. Interacts with ARHGDIA. Interacts with RIPOR1.

It localises to the cell membrane. It is found in the cleavage furrow. Functionally, regulates a signal transduction pathway linking plasma membrane receptors to the assembly of focal adhesions and actin stress fibers. Serves as a microtubule-dependent signal that is required for the myosin contractile ring formation during cell cycle cytokinesis. Regulates apical junction formation in bronchial epithelial cells. This chain is Rho-related GTP-binding protein RhoC (RHOC), found in Bos taurus (Bovine).